We begin with the raw amino-acid sequence, 575 residues long: Cyclic nucleotide-gated channel alpha-4 (575 aa).

The Cytoplasmic portion of the chain corresponds to 1 to 38 (MSQDGKVKTTESTPPAPTKARKWLPVLDPSGDYYYWWL). The helical transmembrane segment at 39–60 (NTMVFPIMYNLIIVVCRACFPD) threads the bilayer. At 61 to 70 (LQHSYLVAWF) the chain is on the extracellular side. A helical transmembrane segment spans residues 71-91 (VLDYTSDLLYLLDIGVRFHTG). At 92 to 116 (FLEQGILVVDKGMIASRYVRTWSFL) the chain is on the cytoplasmic side. Residues 117-135 (LDLASLVPTDAAYVQLGPH) traverse the membrane as a helical segment. The Extracellular segment spans residues 136-140 (IPTLR). A helical transmembrane segment spans residues 141 to 159 (LNRFLRVPRLFEAFDRTET). Over 160–166 (RTAYPNA) the chain is Cytoplasmic. The segment at 164–272 (PNAFRIAKLM…GSMSSVIYNM (109 aa)) is ion conduction pathway. Residues 167–190 (FRIAKLMLYIFVVIHWNSCLYFAL) form a helical membrane-spanning segment. Residues 191–213 (SRYLGFGRDAWVYPDPAQPGFER) are Extracellular-facing. Transmembrane regions (helical) follow at residues 214–248 (LRRQ…LFMV) and 249–273 (GDFL…YNMN). The segment at 231–234 (TVGD) is selectivity filter. The segment at 274–350 (TADAAFYPDH…STLSRVQIFQ (77 aa)) is C-linker. The Cytoplasmic segment spans residues 274–575 (TADAAFYPDH…AGQAGPSGIE (302 aa)). The IQ-type signature appears at 292-302 (LQHVNKRLERR). 348 to 471 (IFQNCEASLL…AVMEEKGREI (124 aa)) is a binding site for a nucleoside 3',5'-cyclic phosphate. Positions 354-474 (ASLLEELVLK…EEKGREILLK (121 aa)) are cyclic nucleotide-binding domain. 3',5'-cyclic GMP is bound by residues Gly-414, Ser-417, Arg-430, and Thr-431. 3',5'-cyclic AMP contacts are provided by Arg-430 and Thr-431. The stretch at 493–547 (TESRLKGLDQQLDDLQTKFARLLAELESSALKIAYRIERLEWQTREWPMPEDMGE) forms a coiled coil. Positions 537 to 575 (REWPMPEDMGEADDEAEPGEGTSKDGEGKAGQAGPSGIE) are disordered. Residues 544-554 (DMGEADDEAEP) show a composition bias toward acidic residues.

It belongs to the cyclic nucleotide-gated cation channel (TC 1.A.1.5) family. CNGA4 subfamily. In terms of assembly, the olfactory cyclic nucleotide-gated channel is an heterotetramer composed of CNGA2, CNGA4 and CNGB1b subunits with 2:1:1 stoichiometry. May form homomeric channels gated by nitric oxide. In terms of processing, N-glycosylated. As to expression, olfactory neurons. Expressed in olfactory sensory cilia (at protein level).

It is found in the cell projection. Its subcellular location is the cilium membrane. The catalysed reaction is Ca(2+)(in) = Ca(2+)(out). It carries out the reaction Na(+)(in) = Na(+)(out). The enzyme catalyses K(+)(in) = K(+)(out). It catalyses the reaction NH4(+)(in) = NH4(+)(out). The catalysed reaction is Rb(+)(in) = Rb(+)(out). It carries out the reaction Li(+)(in) = Li(+)(out). The enzyme catalyses Cs(+)(in) = Cs(+)(out). With respect to regulation, ca(2+)-calmodulin exerts its inhibitory effect in cAMP sensitivity by binding to IQ-like motif of CNGA4 and preferably binds to the channel in the closed state. Inhibition by PIP3 of the CNG channel probably occurs via CGNA2 binding. Ca(2+) currents are inhibited by pimozide, an L-type Ca(2+) channel blocker. Pore-forming subunit of the olfactory cyclic nucleotide-gated channel. Operates in the cilia of olfactory sensory neurons where chemical stimulation of the odorant is converted to an electrical signal. Mediates odorant-induced cAMP-dependent Ca(2+) influx triggering neuron depolarization. The rise of intracellular Ca(2+) levels potentiates the olfactory response by activating Ca(2+)-dependent Cl(-) channels, but it also serves as a negative feedback signal to desensitize the channel for rapid adaptation to odorants. Conducts cAMP- and cGMP-gated ion currents, with permeability for monovalent and divalent cations. May conduct nitric oxide-gated Ca(2+) currents relevant to neurons of vomeronasal organ, a system involved in the perception of pheromones. This is Cyclic nucleotide-gated channel alpha-4 from Rattus norvegicus (Rat).